A 525-amino-acid chain; its full sequence is Chromosomal replication initiator protein DnaA (525 aa).

Residues 1 to 71 (MNDFWQHCSA…ADLAREFWNT (71 aa)) are domain I, interacts with DnaA modulators. The segment at 71 to 188 (TPIEVQFVLD…AEADSMYERS (118 aa)) is domain II. The interval 160 to 181 (AAAGRRTWRPGPGAAPANGAEA) is disordered. Residues 169 to 181 (PGPGAAPANGAEA) show a composition bias toward low complexity. Residues 189–405 (KLNPVLTFDN…GALRKILAYS (217 aa)) are domain III, AAA+ region. ATP is bound by residues Gly-233, Gly-235, Lys-236, and Thr-237. A domain IV, binds dsDNA region spans residues 406–525 (KFHGREISIE…LHVLEQTLKG (120 aa)).

This sequence belongs to the DnaA family. In terms of assembly, oligomerizes as a right-handed, spiral filament on DNA at oriC.

Its subcellular location is the cytoplasm. Functionally, plays an essential role in the initiation and regulation of chromosomal replication. ATP-DnaA binds to the origin of replication (oriC) to initiate formation of the DNA replication initiation complex once per cell cycle. Binds the DnaA box (a 9 base pair repeat at the origin) and separates the double-stranded (ds)DNA. Forms a right-handed helical filament on oriC DNA; dsDNA binds to the exterior of the filament while single-stranded (ss)DNA is stabiized in the filament's interior. The ATP-DnaA-oriC complex binds and stabilizes one strand of the AT-rich DNA unwinding element (DUE), permitting loading of DNA polymerase. After initiation quickly degrades to an ADP-DnaA complex that is not apt for DNA replication. Binds acidic phospholipids. The protein is Chromosomal replication initiator protein DnaA of Burkholderia vietnamiensis (strain G4 / LMG 22486) (Burkholderia cepacia (strain R1808)).